Reading from the N-terminus, the 49-residue chain is MHQSQPQQQIEEYKQIKKLLFLVGLTIGKMATSRILSFLGFINCEIKLK.

The helical transmembrane segment at 20–42 threads the bilayer; it reads LFLVGLTIGKMATSRILSFLGFI.

The protein resides in the membrane. This is an uncharacterized protein from Dictyostelium discoideum (Social amoeba).